Here is a 509-residue protein sequence, read N- to C-terminus: 2-isopropylmalate synthase (509 aa).

The Pyruvate carboxyltransferase domain occupies 4–266 (VRIFDTTLRD…YTGIKTEEIY (263 aa)). The Mn(2+) site is built by D13, H201, H203, and N237. The regulatory domain stretch occupies residues 390–509 (TLDYFHISTG…FDYQAKGEKQ (120 aa)).

This sequence belongs to the alpha-IPM synthase/homocitrate synthase family. LeuA type 1 subfamily. In terms of assembly, homodimer. Mn(2+) is required as a cofactor.

The protein resides in the cytoplasm. The enzyme catalyses 3-methyl-2-oxobutanoate + acetyl-CoA + H2O = (2S)-2-isopropylmalate + CoA + H(+). It participates in amino-acid biosynthesis; L-leucine biosynthesis; L-leucine from 3-methyl-2-oxobutanoate: step 1/4. In terms of biological role, catalyzes the condensation of the acetyl group of acetyl-CoA with 3-methyl-2-oxobutanoate (2-ketoisovalerate) to form 3-carboxy-3-hydroxy-4-methylpentanoate (2-isopropylmalate). The chain is 2-isopropylmalate synthase from Carboxydothermus hydrogenoformans (strain ATCC BAA-161 / DSM 6008 / Z-2901).